The sequence spans 555 residues: Glutamine--tRNA ligase (555 aa).

The short motif at 35–45 (PEPNGYLHIGH) is the 'HIGH' region element. ATP-binding positions include 36-38 (EPN) and 42-48 (HIGHAKS). 2 residues coordinate L-glutamine: D68 and Y213. Residues T232 and 262 to 263 (RL) each bind ATP. The 'KMSKS' region motif lies at 269 to 273 (ITSKR).

It belongs to the class-I aminoacyl-tRNA synthetase family. Monomer.

It is found in the cytoplasm. It carries out the reaction tRNA(Gln) + L-glutamine + ATP = L-glutaminyl-tRNA(Gln) + AMP + diphosphate. In Azotobacter vinelandii (strain DJ / ATCC BAA-1303), this protein is Glutamine--tRNA ligase.